The primary structure comprises 332 residues: RNA polymerase principal sigma factor HrdD (332 aa).

The interval 1-25 (MATRAVARRQSATGETADSASSVRA) is disordered. Positions 10-22 (QSATGETADSASS) are enriched in polar residues. A Polymerase core binding motif is present at residues 124–137 (DLIQEGNAGLVRAV). A DNA-binding region (H-T-H motif) is located at residues 294 to 313 (LTEVGKEHGLTRERIRQIEK).

This sequence belongs to the sigma-70 factor family.

In terms of biological role, sigma factors are initiation factors that promote the attachment of RNA polymerase to specific initiation sites and are then released. This is RNA polymerase principal sigma factor HrdD (hrdD) from Streptomyces viridifaciens.